The chain runs to 427 residues: 3-phosphoshikimate 1-carboxyvinyltransferase (427 aa).

3-phosphoshikimate contacts are provided by Lys-22, Ser-23, and Arg-27. Lys-22 is a binding site for phosphoenolpyruvate. Residues Gly-96 and Arg-124 each coordinate phosphoenolpyruvate. 3-phosphoshikimate-binding residues include Ser-169, Ser-170, Gln-171, Ser-197, Asp-313, Asn-336, and Lys-340. Residue Gln-171 coordinates phosphoenolpyruvate. Residue Asp-313 is the Proton acceptor of the active site. Phosphoenolpyruvate-binding residues include Arg-344, Arg-386, and Lys-411.

Belongs to the EPSP synthase family. Monomer.

The protein localises to the cytoplasm. The enzyme catalyses 3-phosphoshikimate + phosphoenolpyruvate = 5-O-(1-carboxyvinyl)-3-phosphoshikimate + phosphate. It participates in metabolic intermediate biosynthesis; chorismate biosynthesis; chorismate from D-erythrose 4-phosphate and phosphoenolpyruvate: step 6/7. Its function is as follows. Catalyzes the transfer of the enolpyruvyl moiety of phosphoenolpyruvate (PEP) to the 5-hydroxyl of shikimate-3-phosphate (S3P) to produce enolpyruvyl shikimate-3-phosphate and inorganic phosphate. This Citrobacter koseri (strain ATCC BAA-895 / CDC 4225-83 / SGSC4696) protein is 3-phosphoshikimate 1-carboxyvinyltransferase.